The sequence spans 212 residues: MESKLPLLVGVTGGLGSGKSMVCRYLASMGCALFEADVVAKELQVRDSKVIEGITALFGKEVYSYNPKGELQLNRKDIAQVVFSNQEKLGALNRLIHPRVAVAFQQACDNAARSNVAILVKEAAILFESGAHAGLDVVVVVQAATELRVERAVQKGLGTREEILRRLAVQWAPEKLAALADVVIDNNGTPEALYEKTKQLYEQLLQQAMLRR.

The DPCK domain occupies 8–212; it reads LVGVTGGLGS…QLLQQAMLRR (205 aa). 16 to 21 contacts ATP; it reads GSGKSM.

It belongs to the CoaE family.

It localises to the cytoplasm. It catalyses the reaction 3'-dephospho-CoA + ATP = ADP + CoA + H(+). It functions in the pathway cofactor biosynthesis; coenzyme A biosynthesis; CoA from (R)-pantothenate: step 5/5. Functionally, catalyzes the phosphorylation of the 3'-hydroxyl group of dephosphocoenzyme A to form coenzyme A. This Chlorobium chlorochromatii (strain CaD3) protein is Dephospho-CoA kinase.